Consider the following 415-residue polypeptide: Casein kinase I isoform delta (415 aa).

Positions 9–277 (YRLGRKIGSG…YLRQLFRNLF (269 aa)) constitute a Protein kinase domain. ATP contacts are provided by residues 15 to 23 (IGSGSFGDI) and lysine 38. The active-site Proton acceptor is the aspartate 128. The tract at residues 278-364 (HRQGFSYDYV…TSPRPVSGME (87 aa)) is centrosomal localization signal (CLS). Residues 301 to 315 (ADDAERERRDREERL) show a composition bias toward basic and acidic residues. Residues 301 to 415 (ADDAERERRD…SSGLQSVVHR (115 aa)) are disordered. An autoinhibitory region spans residues 317–342 (HSRNPATRGLPSTASGRLRGTQEVAP). Phosphoserine is present on residues serine 328 and serine 331. The span at 347–358 (TPTSHTANTSPR) shows a compositional bias: polar residues. Residue serine 370 is modified to Phosphoserine. Arginine 375 is subject to Omega-N-methylarginine. Residues 380–400 (NVSSSDLTGRQDTSRMSTSQI) show a composition bias toward polar residues. Phosphoserine is present on residues serine 382, serine 383, serine 384, proline 401, serine 407, and serine 411.

It belongs to the protein kinase superfamily. CK1 Ser/Thr protein kinase family. Casein kinase I subfamily. As to quaternary structure, monomer. Component of the circadian core oscillator, which includes the CRY proteins, CLOCK, or NPAS2, BMAL1 or BMAL2, CSNK1D and/or CSNK1E, TIMELESS and the PER proteins. Interacts directly with PER1 and PER2 which may lead to their degradation. Interacts with MAP1A. Interacts with MAPT/TAU, DBNDD2, AIB1/NCOA3 and ESR1. Interacts with AKAP9/AKAP450; this interaction promotes centrosomal subcellular location. Binds to tubulins in mitotic cells upon DNA damage. Interacts with GJA1. Interacts with SNAPIN. Interacts with DNMT1. Interacts with DDX3X; this interaction enhances CSNK1D kinase activity in vitro, but it is unclear whether this interaction is physiologically relevant. Interacts with FAM83A, FAM83B, FAM83E and FAM83H (via DUF1669). In terms of processing, autophosphorylated on serine and threonine residues; this autophosphorylation represses activity. Reactivated by phosphatase-mediated dephosphorylation. May be dephosphorylated by PP1. In terms of tissue distribution, expressed ubiquitously. However, kinase activity is not uniform, with highest kinase activity in splenocytes.

It localises to the cytoplasm. The protein localises to the nucleus. Its subcellular location is the cytoskeleton. The protein resides in the microtubule organizing center. It is found in the centrosome. It localises to the perinuclear region. The protein localises to the cell membrane. Its subcellular location is the spindle. The protein resides in the golgi apparatus. The catalysed reaction is L-seryl-[protein] + ATP = O-phospho-L-seryl-[protein] + ADP + H(+). It catalyses the reaction L-threonyl-[protein] + ATP = O-phospho-L-threonyl-[protein] + ADP + H(+). It carries out the reaction L-seryl-[tau protein] + ATP = O-phospho-L-seryl-[tau protein] + ADP + H(+). The enzyme catalyses L-threonyl-[tau protein] + ATP = O-phospho-L-threonyl-[tau protein] + ADP + H(+). Its activity is regulated as follows. Exhibits substrate-dependent heparin activation. Drug-mediated inhibition leads to a delay of the oscillations with the magnitude of this effect dependent upon the timing of drug administration. Inhibited by phosphorylation. Functionally, essential serine/threonine-protein kinase that regulates diverse cellular growth and survival processes including Wnt signaling, DNA repair and circadian rhythms. It can phosphorylate a large number of proteins. Casein kinases are operationally defined by their preferential utilization of acidic proteins such as caseins as substrates. Phosphorylates connexin-43/GJA1, MAP1A, SNAPIN, MAPT/TAU, TOP2A, DCK, HIF1A, EIF6, p53/TP53, DVL2, DVL3, ESR1, AIB1/NCOA3, DNMT1, PKD2, YAP1, PER1 and PER2. Central component of the circadian clock. In balance with PP1, determines the circadian period length through the regulation of the speed and rhythmicity of PER1 and PER2 phosphorylation. Controls PER1 and PER2 nuclear transport and degradation. YAP1 phosphorylation promotes its SCF(beta-TRCP) E3 ubiquitin ligase-mediated ubiquitination and subsequent degradation. DNMT1 phosphorylation reduces its DNA-binding activity. Phosphorylation of ESR1 and AIB1/NCOA3 stimulates their activity and coactivation. Phosphorylation of DVL2 and DVL3 regulates WNT3A signaling pathway that controls neurite outgrowth. Phosphorylates NEDD9/HEF1. EIF6 phosphorylation promotes its nuclear export. Triggers down-regulation of dopamine receptors in the forebrain. Activates DCK in vitro by phosphorylation. TOP2A phosphorylation favors DNA cleavable complex formation. May regulate the formation of the mitotic spindle apparatus in extravillous trophoblast. Modulates connexin-43/GJA1 gap junction assembly by phosphorylation. Probably involved in lymphocyte physiology. Regulates fast synaptic transmission mediated by glutamate. This Mus musculus (Mouse) protein is Casein kinase I isoform delta (Csnk1d).